The primary structure comprises 226 residues: Ribonuclease T (226 aa).

The Exonuclease domain maps to 20–194 (VVIDVETAGF…YDTERTAELF (175 aa)). The Mg(2+) site is built by D23, E25, H181, and D186. The Proton donor/acceptor role is filled by H181.

Belongs to the RNase T family. In terms of assembly, homodimer. Mg(2+) is required as a cofactor.

In terms of biological role, trims short 3' overhangs of a variety of RNA species, leaving a one or two nucleotide 3' overhang. Responsible for the end-turnover of tRNA: specifically removes the terminal AMP residue from uncharged tRNA (tRNA-C-C-A). Also appears to be involved in tRNA biosynthesis. In Shewanella denitrificans (strain OS217 / ATCC BAA-1090 / DSM 15013), this protein is Ribonuclease T.